A 104-amino-acid chain; its full sequence is Large ribosomal subunit protein uL24 (104 aa).

It belongs to the universal ribosomal protein uL24 family. As to quaternary structure, part of the 50S ribosomal subunit.

Its function is as follows. One of two assembly initiator proteins, it binds directly to the 5'-end of the 23S rRNA, where it nucleates assembly of the 50S subunit. Functionally, one of the proteins that surrounds the polypeptide exit tunnel on the outside of the subunit. The protein is Large ribosomal subunit protein uL24 of Shewanella baltica (strain OS223).